A 33-amino-acid polypeptide reads, in one-letter code: Potassium channel toxin alpha-KTx 10.5 (33 aa).

Intrachain disulfides connect C4/C23, C9/C28, and C13/C30.

Expressed by the venom gland.

Its subcellular location is the secreted. Its function is as follows. Inhibits less than 5% of human voltage-gated potassium (Kv) channel Kv1.3/KCNA3 currents at 100nM concentration and does not block human Kv1.1/KCNA1 and Kv1.2/KCNA2 currents. The protein is Potassium channel toxin alpha-KTx 10.5 of Centruroides bonito (Scorpion).